We begin with the raw amino-acid sequence, 102 residues long: Small ribosomal subunit protein uS10 (102 aa).

Belongs to the universal ribosomal protein uS10 family. Part of the 30S ribosomal subunit.

In terms of biological role, involved in the binding of tRNA to the ribosomes. The chain is Small ribosomal subunit protein uS10 from Coprothermobacter proteolyticus (strain ATCC 35245 / DSM 5265 / OCM 4 / BT).